A 284-amino-acid chain; its full sequence is Protein-S-isoprenylcysteine O-methyltransferase (284 aa).

The Cytoplasmic segment spans residues 1–16 (MAGCAARAPPGSEARL). Residues 17 to 33 (SLATFLLGASVLALPLL) form a helical membrane-spanning segment. The Lumenal portion of the chain corresponds to 34–41 (TRAGLQGR). A helical membrane pass occupies residues 42–59 (TGLALYVAGLNALLLLLY). At 60–69 (RPPRYQIAIR) the chain is on the cytoplasmic side. A helical membrane pass occupies residues 70 to 87 (ACFLGFVFGCGTLLSFSQ). The Lumenal segment spans residues 88-92 (SSWSH). The helical transmembrane segment at 93-112 (FGWYMCSLSLFHYSEYLVTA) threads the bilayer. The Cytoplasmic segment spans residues 113–131 (VNNPKSLSLDSFLLNHSLE). The chain crosses the membrane as a helical span at residues 132–149 (YTVAALSSWLEFTLENIF). Over 150–154 (WPELK) the chain is Lumenal. A helical transmembrane segment spans residues 155–174 (QITWLSVTGLLMVVFGECLR). Residues 175 to 212 (KAAMFTAGSNFNHVVQNEKSDTHTLVTSGVYAWFRHPS) lie on the Cytoplasmic side of the membrane. Residues glutamine 190, 197 to 200 (HTLV), tyrosine 205, and 210 to 213 (HPSY) each bind S-adenosyl-L-methionine. Residues 213-228 (YVGWFYWSIGTQVMLC) traverse the membrane as a helical segment. Asparagine 229 is a topological domain (lumenal). The helical transmembrane segment at 230 to 244 (PICGVSYALTVWRFF) threads the bilayer. Over 245 to 284 (RDRTEEEEISLIHFFGEEYLEYKKRVPTGLPFIKGVKVDL) the chain is Cytoplasmic. Arginine 247 lines the substrate pocket. Residue glutamate 251 coordinates S-adenosyl-L-methionine.

The protein belongs to the class VI-like SAM-binding methyltransferase superfamily. Isoprenylcysteine carboxyl methyltransferase family. As to expression, ubiquitously expressed. Expressed at higher levels in the cerebellum and putamen than in other brain regions. Abundant expression seen in the Purkinje cells and pontine neurons.

Its subcellular location is the endoplasmic reticulum membrane. The enzyme catalyses [protein]-C-terminal S-[(2E,6E)-farnesyl]-L-cysteine + S-adenosyl-L-methionine = [protein]-C-terminal S-[(2E,6E)-farnesyl]-L-cysteine methyl ester + S-adenosyl-L-homocysteine. Its activity is regulated as follows. Competitively inhibited by N-acetyl-S-trans,trans-farnesyl-l-cysteine (AFC). Functionally, catalyzes the post-translational methylation of isoprenylated C-terminal cysteine residues. This is Protein-S-isoprenylcysteine O-methyltransferase (ICMT) from Homo sapiens (Human).